The primary structure comprises 168 residues: Nicotinamide-nucleotide adenylyltransferase (168 aa).

The ATP site is built by R8, F9, H13, H16, F119, R121, Y124, G126, T127, and R130.

It belongs to the archaeal NMN adenylyltransferase family. Homohexamer existing as a trimer of dimers.

It is found in the cytoplasm. The catalysed reaction is beta-nicotinamide D-ribonucleotide + ATP + H(+) = diphosphate + NAD(+). It functions in the pathway cofactor biosynthesis; NAD(+) biosynthesis; NAD(+) from nicotinamide D-ribonucleotide: step 1/1. Catalyzes the formation of NAD(+) from nicotinamide mononucleotide (NMN) and ATP. This is Nicotinamide-nucleotide adenylyltransferase from Methanocaldococcus jannaschii (strain ATCC 43067 / DSM 2661 / JAL-1 / JCM 10045 / NBRC 100440) (Methanococcus jannaschii).